The primary structure comprises 264 residues: Ribosomal RNA small subunit methyltransferase A (264 aa).

S-adenosyl-L-methionine is bound by residues asparagine 15, isoleucine 17, glycine 42, glutamate 64, aspartate 90, and asparagine 109.

Belongs to the class I-like SAM-binding methyltransferase superfamily. rRNA adenine N(6)-methyltransferase family. RsmA subfamily.

It is found in the cytoplasm. It carries out the reaction adenosine(1518)/adenosine(1519) in 16S rRNA + 4 S-adenosyl-L-methionine = N(6)-dimethyladenosine(1518)/N(6)-dimethyladenosine(1519) in 16S rRNA + 4 S-adenosyl-L-homocysteine + 4 H(+). Its function is as follows. Specifically dimethylates two adjacent adenosines (A1518 and A1519) in the loop of a conserved hairpin near the 3'-end of 16S rRNA in the 30S particle. May play a critical role in biogenesis of 30S subunits. The sequence is that of Ribosomal RNA small subunit methyltransferase A from Wolbachia pipientis subsp. Culex pipiens (strain wPip).